Consider the following 485-residue polypeptide: Noelin (485 aa).

A signal peptide spans 1-16 (MSVPLLKIGVVLSTMA). Residues Asn-33, Asn-103, Asn-187, Asn-288, Asn-307, Asn-394, Asn-431, and Asn-473 are each glycosylated (N-linked (GlcNAc...) asparagine). The stretch at 87-225 (RDARTKQLRQ…ERLRACMQKL (139 aa)) forms a coiled coil. The 253-residue stretch at 226–478 (ACGKLTGISD…QILYNVTLFH (253 aa)) folds into the Olfactomedin-like domain. Cys-227 and Cys-409 are joined by a disulfide.

In terms of assembly, homotetramer; disulfide-linked. Dimer of dimers, giving rise to a V-shaped homotretramer. Isoform 1 and isoform 3 interact with RTN4R. Identified in a complex with RTN4R and LINGO1. Peripherally associated with AMPAR complex. AMPAR complex consists of an inner core made of 4 pore-forming GluA/GRIA proteins (GRIA1, GRIA2, GRIA3 and GRIA4) and 4 major auxiliary subunits arranged in a twofold symmetry. One of the two pairs of distinct binding sites is occupied either by CNIH2, CNIH3 or CACNG2, CACNG3. The other harbors CACNG2, CACNG3, CACNG4, CACNG8 or GSG1L. This inner core of AMPAR complex is complemented by outer core constituents binding directly to the GluA/GRIA proteins at sites distinct from the interaction sites of the inner core constituents. Outer core constituents include at least PRRT1, PRRT2, CKAMP44/SHISA9, FRRS1L and NRN1. The proteins of the inner and outer core serve as a platform for other, more peripherally associated AMPAR constituents, including OLFM1. Alone or in combination, these auxiliary subunits control the gating and pharmacology of the AMPAR complex and profoundly impact their biogenesis and protein processing. Interacts with OLFM2.

The protein resides in the secreted. The protein localises to the synapse. Its subcellular location is the endoplasmic reticulum. It is found in the cell projection. It localises to the axon. The protein resides in the perikaryon. In terms of biological role, contributes to the regulation of axonal growth in the embryonic and adult central nervous system by inhibiting interactions between RTN4R and LINGO1. Inhibits RTN4R-mediated axon growth cone collapse. May play an important role in regulating the production of neural crest cells by the neural tube. May be required for normal responses to olfactory stimuli. This is Noelin (OLFM1) from Homo sapiens (Human).